A 112-amino-acid polypeptide reads, in one-letter code: Nucleoid-associated protein CV_1611 (112 aa).

This sequence belongs to the YbaB/EbfC family. In terms of assembly, homodimer.

The protein resides in the cytoplasm. It localises to the nucleoid. Its function is as follows. Binds to DNA and alters its conformation. May be involved in regulation of gene expression, nucleoid organization and DNA protection. The sequence is that of Nucleoid-associated protein CV_1611 from Chromobacterium violaceum (strain ATCC 12472 / DSM 30191 / JCM 1249 / CCUG 213 / NBRC 12614 / NCIMB 9131 / NCTC 9757 / MK).